The primary structure comprises 209 residues: Large ribosomal subunit protein uL3 (209 aa).

N5-methylglutamine is present on Gln-150.

Belongs to the universal ribosomal protein uL3 family. Part of the 50S ribosomal subunit. Forms a cluster with proteins L14 and L19. Methylated by PrmB.

Its function is as follows. One of the primary rRNA binding proteins, it binds directly near the 3'-end of the 23S rRNA, where it nucleates assembly of the 50S subunit. The chain is Large ribosomal subunit protein uL3 from Salmonella paratyphi C (strain RKS4594).